A 160-amino-acid polypeptide reads, in one-letter code: Protein-export protein SecB (160 aa).

The protein belongs to the SecB family. As to quaternary structure, homotetramer, a dimer of dimers. One homotetramer interacts with 1 SecA dimer.

It localises to the cytoplasm. In terms of biological role, one of the proteins required for the normal export of preproteins out of the cell cytoplasm. It is a molecular chaperone that binds to a subset of precursor proteins, maintaining them in a translocation-competent state. It also specifically binds to its receptor SecA. In Rhizobium etli (strain ATCC 51251 / DSM 11541 / JCM 21823 / NBRC 15573 / CFN 42), this protein is Protein-export protein SecB.